The following is a 265-amino-acid chain: Ribosomal RNA small subunit methyltransferase A (265 aa).

S-adenosyl-L-methionine contacts are provided by His13, Leu15, Gly40, Glu62, Asp87, and Asn106.

This sequence belongs to the class I-like SAM-binding methyltransferase superfamily. rRNA adenine N(6)-methyltransferase family. RsmA subfamily.

It is found in the cytoplasm. It carries out the reaction adenosine(1518)/adenosine(1519) in 16S rRNA + 4 S-adenosyl-L-methionine = N(6)-dimethyladenosine(1518)/N(6)-dimethyladenosine(1519) in 16S rRNA + 4 S-adenosyl-L-homocysteine + 4 H(+). Its function is as follows. Specifically dimethylates two adjacent adenosines (A1518 and A1519) in the loop of a conserved hairpin near the 3'-end of 16S rRNA in the 30S particle. May play a critical role in biogenesis of 30S subunits. The polypeptide is Ribosomal RNA small subunit methyltransferase A (Persephonella marina (strain DSM 14350 / EX-H1)).